The primary structure comprises 270 residues: Formamidopyrimidine-DNA glycosylase (270 aa).

P2 serves as the catalytic Schiff-base intermediate with DNA. E3 acts as the Proton donor in catalysis. Residue K57 is the Proton donor; for beta-elimination activity of the active site. Residues H90, R109, and K150 each coordinate DNA. Residues 235 to 269 form an FPG-type zinc finger; the sequence is LVYGNKDKPCPRCGTKIKSIIIGQRNSFFCPQCQK. R259 acts as the Proton donor; for delta-elimination activity in catalysis.

This sequence belongs to the FPG family. As to quaternary structure, monomer. Requires Zn(2+) as cofactor.

It catalyses the reaction Hydrolysis of DNA containing ring-opened 7-methylguanine residues, releasing 2,6-diamino-4-hydroxy-5-(N-methyl)formamidopyrimidine.. The catalysed reaction is 2'-deoxyribonucleotide-(2'-deoxyribose 5'-phosphate)-2'-deoxyribonucleotide-DNA = a 3'-end 2'-deoxyribonucleotide-(2,3-dehydro-2,3-deoxyribose 5'-phosphate)-DNA + a 5'-end 5'-phospho-2'-deoxyribonucleoside-DNA + H(+). Involved in base excision repair of DNA damaged by oxidation or by mutagenic agents. Acts as a DNA glycosylase that recognizes and removes damaged bases. Has a preference for oxidized purines, such as 7,8-dihydro-8-oxoguanine (8-oxoG). Has AP (apurinic/apyrimidinic) lyase activity and introduces nicks in the DNA strand. Cleaves the DNA backbone by beta-delta elimination to generate a single-strand break at the site of the removed base with both 3'- and 5'-phosphates. In Histophilus somni (strain 2336) (Haemophilus somnus), this protein is Formamidopyrimidine-DNA glycosylase.